The primary structure comprises 248 residues: Large ribosomal subunit protein uL2 (248 aa).

Residues 203–248 (AHPAGGGHHPKGLTPAPRNAPPGRKVGHIAPRRTGRKKGASRTPTQ) form a disordered region. Residues 227 to 242 (KVGHIAPRRTGRKKGA) show a composition bias toward basic residues.

Belongs to the universal ribosomal protein uL2 family. In terms of assembly, part of the 50S ribosomal subunit. Forms a bridge to the 30S subunit in the 70S ribosome.

One of the primary rRNA binding proteins. Required for association of the 30S and 50S subunits to form the 70S ribosome, for tRNA binding and peptide bond formation. It has been suggested to have peptidyltransferase activity; this is somewhat controversial. Makes several contacts with the 16S rRNA in the 70S ribosome. The polypeptide is Large ribosomal subunit protein uL2 (Thermofilum pendens (strain DSM 2475 / Hrk 5)).